We begin with the raw amino-acid sequence, 290 residues long: Small ribosomal subunit protein uS11 (290 aa).

The interval 243-271 (DWEAAPAGFPATGEWSDAAPGAAAPNWDA) is disordered. A compositionally biased stretch (low complexity) spans 257–271 (WSDAAPGAAAPNWDA).

The protein belongs to the universal ribosomal protein uS2 family. Component of the small ribosomal subunit (SSU). Mature N.crassa ribosomes consist of a small (40S) and a large (60S) subunit. The 40S small subunit contains 1 molecule of ribosomal RNA (18S rRNA) and at least 32 different proteins. The large 60S subunit contains 3 rRNA molecules (26S, 5.8S and 5S rRNA) and at least 42 different proteins. Interacts with rps21.

It is found in the cytoplasm. Its function is as follows. Component of the ribosome, a large ribonucleoprotein complex responsible for the synthesis of proteins in the cell. The small ribosomal subunit (SSU) binds messenger RNAs (mRNAs) and translates the encoded message by selecting cognate aminoacyl-transfer RNA (tRNA) molecules. The large subunit (LSU) contains the ribosomal catalytic site termed the peptidyl transferase center (PTC), which catalyzes the formation of peptide bonds, thereby polymerizing the amino acids delivered by tRNAs into a polypeptide chain. The nascent polypeptides leave the ribosome through a tunnel in the LSU and interact with protein factors that function in enzymatic processing, targeting, and the membrane insertion of nascent chains at the exit of the ribosomal tunnel. uS2 is required for the assembly and/or stability of the 40S ribosomal subunit. Required for the processing of the 20S rRNA-precursor to mature 18S rRNA in a late step of the maturation of 40S ribosomal subunits. The sequence is that of Small ribosomal subunit protein uS11 from Neurospora crassa (strain ATCC 24698 / 74-OR23-1A / CBS 708.71 / DSM 1257 / FGSC 987).